The primary structure comprises 149 residues: Interleukin-2 (149 aa).

The signal sequence occupies residues 1–20 (MYRMQLLSCIALTLAVLANS). Residue threonine 23 is glycosylated (O-linked (GalNAc...) threonine). Cysteine 78 and cysteine 121 are disulfide-bonded. The N-linked (GlcNAc...) asparagine glycan is linked to asparagine 106.

The protein belongs to the IL-2 family.

It localises to the secreted. Functionally, cytokine produced by activated CD4-positive helper T-cells and to a lesser extend activated CD8-positive T-cells and natural killer (NK) cells that plays pivotal roles in the immune response and tolerance. Binds to a receptor complex composed of either the high-affinity trimeric IL-2R (IL2RA/CD25, IL2RB/CD122 and IL2RG/CD132) or the low-affinity dimeric IL-2R (IL2RB and IL2RG). Interaction with the receptor leads to oligomerization and conformation changes in the IL-2R subunits resulting in downstream signaling starting with phosphorylation of JAK1 and JAK3. In turn, JAK1 and JAK3 phosphorylate the receptor to form a docking site leading to the phosphorylation of several substrates including STAT5. This process leads to activation of several pathways including STAT, phosphoinositide-3-kinase/PI3K and mitogen-activated protein kinase/MAPK pathways. Functions as a T-cell growth factor and can increase NK-cell cytolytic activity as well. Promotes strong proliferation of activated B-cells and subsequently immunoglobulin production. Plays a pivotal role in regulating the adaptive immune system by controlling the survival and proliferation of regulatory T-cells, which are required for the maintenance of immune tolerance. Moreover, participates in the differentiation and homeostasis of effector T-cell subsets, including Th1, Th2, Th17 as well as memory CD8-positive T-cells. This is Interleukin-2 (IL2) from Equus caballus (Horse).